The chain runs to 438 residues: Gamma-glutamyl phosphate reductase (438 aa).

This sequence belongs to the gamma-glutamyl phosphate reductase family.

It localises to the cytoplasm. The enzyme catalyses L-glutamate 5-semialdehyde + phosphate + NADP(+) = L-glutamyl 5-phosphate + NADPH + H(+). Its pathway is amino-acid biosynthesis; L-proline biosynthesis; L-glutamate 5-semialdehyde from L-glutamate: step 2/2. Catalyzes the NADPH-dependent reduction of L-glutamate 5-phosphate into L-glutamate 5-semialdehyde and phosphate. The product spontaneously undergoes cyclization to form 1-pyrroline-5-carboxylate. This is Gamma-glutamyl phosphate reductase from Prochlorococcus marinus (strain NATL1A).